The primary structure comprises 100 residues: Small ribosomal subunit protein uS14c (100 aa).

Belongs to the universal ribosomal protein uS14 family. Part of the 30S ribosomal subunit.

The protein localises to the plastid. Its subcellular location is the chloroplast. Its function is as follows. Binds 16S rRNA, required for the assembly of 30S particles. The protein is Small ribosomal subunit protein uS14c of Zygnema circumcarinatum (Green alga).